The sequence spans 764 residues: Protein FAR1-RELATED SEQUENCE 7 (764 aa).

The 77-residue stretch at 42-118 (DYYNSYATRT…QKEHNHDLGG (77 aa)) folds into the FAR1 1 domain. The interval 119 to 144 (HIEEAQTTPRPSVQQRAPAPTKLGIS) is disordered. Residues 123-133 (AQTTPRPSVQQ) show a composition bias toward polar residues. An FAR1 2 domain is found at 204-280 (QFYQAYAEVV…NKDHNHDLEP (77 aa)). The MULE domain maps to 375–471 (AVVFDTSYRK…SAWQIRSKER (97 aa)). The SWIM-type zinc finger occupies 650–686 (HAVTFSASNLNASCSCQMFEYEGLLCRHILKVFNLLD).

It belongs to the FHY3/FAR1 family. In terms of tissue distribution, expressed in hypocotyls, rosette and cauline leaves, inflorescences stems, flowers and siliques.

The protein localises to the nucleus. Its function is as follows. Putative transcription activator involved in regulating light control of development. The chain is Protein FAR1-RELATED SEQUENCE 7 (FRS7) from Arabidopsis thaliana (Mouse-ear cress).